We begin with the raw amino-acid sequence, 333 residues long: Probable tRNA pseudouridine synthase B (333 aa).

Asp-71 acts as the Nucleophile in catalysis. The region spanning 238-313 (LPKIWVRDSA…LVARTDRVVM (76 aa)) is the PUA domain.

Belongs to the pseudouridine synthase TruB family. Type 2 subfamily.

The enzyme catalyses uridine(55) in tRNA = pseudouridine(55) in tRNA. Its function is as follows. Could be responsible for synthesis of pseudouridine from uracil-55 in the psi GC loop of transfer RNAs. The sequence is that of Probable tRNA pseudouridine synthase B from Pyrobaculum calidifontis (strain DSM 21063 / JCM 11548 / VA1).